Reading from the N-terminus, the 201-residue chain is MQYPEPIAKLIDSYTKLPGIGPKTATRLAFYTLGMNEEDVQDFSKALISAKTDLTFCSICGNITATDTDPCVICRDQSRDQSTVFVVENSRDVMAMENTRDYHGLYHVLNGVISPSAGTGPEDINLPSLIRRLSEHEEIKEVIVGTNANAEGEATAMYLARLLKPAGIAVTRLAHGLAVGSDIDYADELTLIKAVQGRTKL.

Residues 57-74 form a C4-type zinc finger; that stretch reads CSICGNITATDTDPCVIC. In terms of domain architecture, Toprim spans 82 to 178; it reads STVFVVENSR…AVTRLAHGLA (97 aa).

Belongs to the RecR family.

In terms of biological role, may play a role in DNA repair. It seems to be involved in an RecBC-independent recombinational process of DNA repair. It may act with RecF and RecO. The protein is Recombination protein RecR of Leuconostoc mesenteroides subsp. mesenteroides (strain ATCC 8293 / DSM 20343 / BCRC 11652 / CCM 1803 / JCM 6124 / NCDO 523 / NBRC 100496 / NCIMB 8023 / NCTC 12954 / NRRL B-1118 / 37Y).